A 247-amino-acid chain; its full sequence is Homeobox protein BarH-like 1b (247 aa).

Disordered stretches follow at residues 118–138 (RGKL…GRRS) and 197–247 (GGGL…SQEE). The segment at residues 135-194 (GRRSRTVFTELQLMGLEKRFEKQKYLSTPDRIDLAESLGLSQLQVKTWYQNRRMKWKKIV) is a DNA-binding region (homeobox). The span at 223–234 (EQERARDAEKPP) shows a compositional bias: basic and acidic residues.

Belongs to the BAR homeobox family. Interacts with serum response factor (SRF). As to expression, expressed in smooth muscle cells of the upper digestive organs and their attached arteries and to craniofacial structures.

It localises to the nucleus. Functionally, transcription factor which is involved with the serum response factor (SRF) in the smooth muscle cell-specific transcription of the beta-tropomyosin gene in the upper digestive organs and their attached arteries. This Gallus gallus (Chicken) protein is Homeobox protein BarH-like 1b (BARX1B).